The primary structure comprises 556 residues: 2-isopropylmalate synthase (556 aa).

The Pyruvate carboxyltransferase domain occupies 33-307; the sequence is PIWLSSDLRD…DPQLDFSDID (275 aa). Mg(2+) contacts are provided by aspartate 42, histidine 246, histidine 248, and asparagine 282. Residues 439 to 556 are regulatory domain; it reads ATAPYTLKGH…ALHQAQEAAA (118 aa).

It belongs to the alpha-IPM synthase/homocitrate synthase family. LeuA type 2 subfamily. Homodimer. It depends on Mg(2+) as a cofactor.

It is found in the cytoplasm. The catalysed reaction is 3-methyl-2-oxobutanoate + acetyl-CoA + H2O = (2S)-2-isopropylmalate + CoA + H(+). Its pathway is amino-acid biosynthesis; L-leucine biosynthesis; L-leucine from 3-methyl-2-oxobutanoate: step 1/4. In terms of biological role, catalyzes the condensation of the acetyl group of acetyl-CoA with 3-methyl-2-oxobutanoate (2-ketoisovalerate) to form 3-carboxy-3-hydroxy-4-methylpentanoate (2-isopropylmalate). In Stutzerimonas stutzeri (strain A1501) (Pseudomonas stutzeri), this protein is 2-isopropylmalate synthase.